A 105-amino-acid chain; its full sequence is MRKIKRNDEVIVIAGKDKGKRGKVVKVVGENRVLVSGVNTVKKHEKPNPMKGSTGGIVEQEAPIQVSNVAIYNSATGKADRVGFKLNEDGTKVRVFKSNSEAIDA.

This sequence belongs to the universal ribosomal protein uL24 family. In terms of assembly, part of the 50S ribosomal subunit.

One of two assembly initiator proteins, it binds directly to the 5'-end of the 23S rRNA, where it nucleates assembly of the 50S subunit. Functionally, one of the proteins that surrounds the polypeptide exit tunnel on the outside of the subunit. This is Large ribosomal subunit protein uL24 from Marinomonas sp. (strain MWYL1).